Consider the following 129-residue polypeptide: MSNNYETLYILRPDLGEEVVQQQVERYRTLITEHSATDIQVKVWGKKRLAYPIKKLNDGVYVQMNYQASGKQVAPMERAMRLSDEVIRYLTLKLDRVVAPPADLSPLTEIPPSPITEAVVEDDGISAED.

This sequence belongs to the bacterial ribosomal protein bS6 family.

In terms of biological role, binds together with bS18 to 16S ribosomal RNA. This is Small ribosomal subunit protein bS6 from Microcystis aeruginosa (strain NIES-843 / IAM M-2473).